A 97-amino-acid polypeptide reads, in one-letter code: Acylphosphatase (97 aa).

The Acylphosphatase-like domain occupies 5–92 (RAHVWISGRV…GEFVRFEITF (88 aa)). Residues Arg-20 and Asn-38 contribute to the active site.

Belongs to the acylphosphatase family.

It carries out the reaction an acyl phosphate + H2O = a carboxylate + phosphate + H(+). The chain is Acylphosphatase (acyP) from Syntrophobacter fumaroxidans (strain DSM 10017 / MPOB).